The sequence spans 297 residues: Oxidoreductase aprR (297 aa).

The protein belongs to the NmrA-type oxidoreductase family. Isoflavone reductase subfamily.

The protein operates within secondary metabolite biosynthesis. Functionally, oxidoreductase; part of the gene cluster that mediates the biosynthesis of the asperipin-2a, a bicyclic peptide that possesses two macrocyclic ether rings consisting of 14- and 17-membered paracyclophans. The pathway starts with the processing of the precursor aprA by kexin proteases to produce 11 identical copies of the hexapeptide Phe-Tyr-Tyr-Thr-Gly-Tyr. Macrocyclization of asperipin-2a may accompany an alpha-hydroxylation-dehydration sequence to give an imine, which is readily hydrolyzed to yield putative ketone intermediate. The reductase aprR may be required for the final reduction to yield asperipin-2a. This chain is Oxidoreductase aprR, found in Aspergillus flavus (strain ATCC 200026 / FGSC A1120 / IAM 13836 / NRRL 3357 / JCM 12722 / SRRC 167).